The following is a 650-amino-acid chain: Probable LIM domain-containing serine/threonine-protein kinase DDB_G0287001 (650 aa).

2 consecutive LIM zinc-binding domains span residues 4–63 (NNCG…KLNA) and 64–122 (RKCF…PSDK). 3 disordered regions span residues 118-138 (KPSDKTKTTTPPPSEIPLPGK), 171-197 (LSSSGGSGNSISGSGGTNTGSSTSSFM), and 293-320 (LLNSSSPSPSTSSTSSTSSISQSQNLNT). The span at 173–188 (SSGGSGNSISGSGGTN) shows a compositional bias: gly residues. The Protein kinase domain maps to 386-643 (VAFGDVIASG…DTLKKISESL (258 aa)). ATP is bound by residues 392–400 (IASGASGKV) and lysine 413. The active-site Proton acceptor is aspartate 509.

This sequence belongs to the protein kinase superfamily. TKL Ser/Thr protein kinase family.

The enzyme catalyses L-seryl-[protein] + ATP = O-phospho-L-seryl-[protein] + ADP + H(+). It carries out the reaction L-threonyl-[protein] + ATP = O-phospho-L-threonyl-[protein] + ADP + H(+). This chain is Probable LIM domain-containing serine/threonine-protein kinase DDB_G0287001, found in Dictyostelium discoideum (Social amoeba).